The chain runs to 500 residues: Glutamate decarboxylase (500 aa).

K277 bears the N6-(pyridoxal phosphate)lysine mark. The tract at residues 469–500 is calmodulin-binding; sequence VHKKTDSEVQLEMITAWKKFVEEKKKKTNRVC.

This sequence belongs to the group II decarboxylase family. As to quaternary structure, homodimer. It depends on pyridoxal 5'-phosphate as a cofactor.

It carries out the reaction L-glutamate + H(+) = 4-aminobutanoate + CO2. Catalyzes the production of GABA. The calmodulin-binding is calcium-dependent and it is proposed that this may, directly or indirectly, form a calcium regulated control of GABA biosynthesis. The sequence is that of Glutamate decarboxylase (GAD) from Petunia hybrida (Petunia).